A 351-amino-acid chain; its full sequence is UPF0764 protein C16orf89 homolog (351 aa).

A signal peptide spans 1 to 25; the sequence is MKSLKMLYPLFMLLVLSSKIDLSNQ.

Belongs to the UPF0764 family. Homodimer.

Its subcellular location is the secreted. This Danio rerio (Zebrafish) protein is UPF0764 protein C16orf89 homolog.